A 343-amino-acid polypeptide reads, in one-letter code: Putative MO25-like protein At4g17270 (343 aa).

Belongs to the Mo25 family.

This chain is Putative MO25-like protein At4g17270, found in Arabidopsis thaliana (Mouse-ear cress).